The following is a 699-amino-acid chain: Chitin synthase 7 (699 aa).

Transmembrane regions (helical) follow at residues 19-39, 58-80, 98-118, 445-465, 474-494, and 507-527; these read IVGV…AAFL, SVVV…VVTL, LQWF…LFCI, FMQN…LAII, LPVG…IYFG, and VMFV…IFTA. The segment at 628 to 648 is disordered; it reads AAGGSGEASEPGTRWAPDPRE.

Belongs to the chitin synthase family. Class VI subfamily.

It is found in the cell membrane. It catalyses the reaction [(1-&gt;4)-N-acetyl-beta-D-glucosaminyl](n) + UDP-N-acetyl-alpha-D-glucosamine = [(1-&gt;4)-N-acetyl-beta-D-glucosaminyl](n+1) + UDP + H(+). Polymerizes chitin, a structural polymer of the cell wall and septum, by transferring the sugar moiety of UDP-GlcNAc to the non-reducing end of the growing chitin polymer. Plays a role in cell wall integrity. Required to successfully penetrate the host plants and thus plays a key role in pathogenicity. This is Chitin synthase 7 from Verticillium dahliae (strain VdLs.17 / ATCC MYA-4575 / FGSC 10137) (Verticillium wilt).